The chain runs to 516 residues: GTPase Obg (516 aa).

The region spanning 4-161 (PTFVDRVTLH…LEIVLELKVV (158 aa)) is the Obg domain. In terms of domain architecture, OBG-type G spans 162 to 332 (ADIGLVGFPS…LTFAMAGIVE (171 aa)). Residues 168–175 (GFPSAGKS), 193–197 (FTTLV), 214–217 (DVPG), 284–287 (NKVD), and 313–315 (SAA) each bind GTP. Mg(2+) is bound by residues serine 175 and threonine 195. The OCT domain maps to 351 to 432 (PSVDGSDAFT…ENAVVFDFKP (82 aa)). Basic and acidic residues predominate over residues 466–491 (AMADRAEGETRADVARRLDRPAREDG). The disordered stretch occupies residues 466 to 516 (AMADRAEGETRADVARRLDRPAREDGGAYGPQSYEIGGRDDPDWAEEDLGE).

Belongs to the TRAFAC class OBG-HflX-like GTPase superfamily. OBG GTPase family. Monomer. The cofactor is Mg(2+).

Its subcellular location is the cytoplasm. Functionally, an essential GTPase which binds GTP, GDP and possibly (p)ppGpp with moderate affinity, with high nucleotide exchange rates and a fairly low GTP hydrolysis rate. Plays a role in control of the cell cycle, stress response, ribosome biogenesis and in those bacteria that undergo differentiation, in morphogenesis control. This Nocardioides sp. (strain ATCC BAA-499 / JS614) protein is GTPase Obg.